Consider the following 238-residue polypeptide: 6-phosphogluconolactonase (238 aa).

The protein belongs to the glucosamine/galactosamine-6-phosphate isomerase family. 6-phosphogluconolactonase subfamily.

The catalysed reaction is 6-phospho-D-glucono-1,5-lactone + H2O = 6-phospho-D-gluconate + H(+). It participates in carbohydrate degradation; pentose phosphate pathway; D-ribulose 5-phosphate from D-glucose 6-phosphate (oxidative stage): step 2/3. In terms of biological role, hydrolysis of 6-phosphogluconolactone to 6-phosphogluconate. In Mesorhizobium japonicum (strain LMG 29417 / CECT 9101 / MAFF 303099) (Mesorhizobium loti (strain MAFF 303099)), this protein is 6-phosphogluconolactonase (pgl).